Reading from the N-terminus, the 534-residue chain is Chaperonin GroEL, chloroplastic (534 aa).

Residues threonine 29–proline 32, aspartate 86–threonine 90, glycine 414, and aspartate 496 each bind ATP.

This sequence belongs to the chaperonin (HSP60) family. As to quaternary structure, forms a cylinder of 14 subunits composed of two heptameric rings stacked back-to-back. Interacts with the co-chaperonin GroES.

It localises to the plastid. The protein resides in the chloroplast. The catalysed reaction is ATP + H2O + a folded polypeptide = ADP + phosphate + an unfolded polypeptide.. Functionally, together with its co-chaperonin GroES, plays an essential role in assisting protein folding. The GroEL-GroES system forms a nano-cage that allows encapsulation of the non-native substrate proteins and provides a physical environment optimized to promote and accelerate protein folding. The protein is Chaperonin GroEL, chloroplastic of Galdieria sulphuraria (Red alga).